Here is a 159-residue protein sequence, read N- to C-terminus: Large ribosomal subunit protein uL11 (159 aa).

The protein belongs to the universal ribosomal protein uL11 family. As to quaternary structure, part of the ribosomal stalk of the 50S ribosomal subunit. Interacts with L10 and the large rRNA to form the base of the stalk. L10 forms an elongated spine to which L12 dimers bind in a sequential fashion forming a multimeric L10(L12)X complex.

Forms part of the ribosomal stalk which helps the ribosome interact with GTP-bound translation factors. In Methanothrix thermoacetophila (strain DSM 6194 / JCM 14653 / NBRC 101360 / PT) (Methanosaeta thermophila), this protein is Large ribosomal subunit protein uL11.